The following is a 347-amino-acid chain: ATP-dependent kinase YFH7 (347 aa).

33-41 (GPPGSGKST) provides a ligand contact to ATP.

The protein belongs to the YFH7 family.

ATP-dependent kinase that could be involved in endoplasmic reticulum membrane assembly. The sequence is that of ATP-dependent kinase YFH7 (YFH7) from Lachancea thermotolerans (strain ATCC 56472 / CBS 6340 / NRRL Y-8284) (Yeast).